Reading from the N-terminus, the 360-residue chain is Peptide chain release factor 1 (360 aa).

N5-methylglutamine is present on glutamine 237.

It belongs to the prokaryotic/mitochondrial release factor family. In terms of processing, methylated by PrmC. Methylation increases the termination efficiency of RF1.

It is found in the cytoplasm. Its function is as follows. Peptide chain release factor 1 directs the termination of translation in response to the peptide chain termination codons UAG and UAA. The sequence is that of Peptide chain release factor 1 from Azotobacter vinelandii (strain DJ / ATCC BAA-1303).